Reading from the N-terminus, the 453-residue chain is Chromosomal replication initiator protein DnaA (453 aa).

The segment at 1-71 (MSEKEIWEKV…QAILFDVVGY (71 aa)) is domain I, interacts with DnaA modulators. The tract at residues 71-114 (YEVKPHFITTEELANYSNNETATPKETTKPSTETTEDNHVLGRE) is domain II. The segment at 115-331 (QFNAHNTFDT…GALTRLLAYS (217 aa)) is domain III, AAA+ region. 4 residues coordinate ATP: G159, G161, K162, and T163. Residues 332–453 (QLLGKPITTE…ENLEKEIRNV (122 aa)) are domain IV, binds dsDNA.

The protein belongs to the DnaA family. As to quaternary structure, oligomerizes as a right-handed, spiral filament on DNA at oriC.

The protein localises to the cytoplasm. Its function is as follows. Plays an essential role in the initiation and regulation of chromosomal replication. ATP-DnaA binds to the origin of replication (oriC) to initiate formation of the DNA replication initiation complex once per cell cycle. Binds the DnaA box (a 9 base pair repeat at the origin) and separates the double-stranded (ds)DNA. Forms a right-handed helical filament on oriC DNA; dsDNA binds to the exterior of the filament while single-stranded (ss)DNA is stabiized in the filament's interior. The ATP-DnaA-oriC complex binds and stabilizes one strand of the AT-rich DNA unwinding element (DUE), permitting loading of DNA polymerase. After initiation quickly degrades to an ADP-DnaA complex that is not apt for DNA replication. Binds acidic phospholipids. This chain is Chromosomal replication initiator protein DnaA, found in Staphylococcus aureus (strain bovine RF122 / ET3-1).